A 135-amino-acid polypeptide reads, in one-letter code: Large ribosomal subunit protein bL19 (135 aa).

This sequence belongs to the bacterial ribosomal protein bL19 family.

Functionally, this protein is located at the 30S-50S ribosomal subunit interface and may play a role in the structure and function of the aminoacyl-tRNA binding site. This is Large ribosomal subunit protein bL19 from Xanthomonas campestris pv. campestris (strain 8004).